Consider the following 812-residue polypeptide: Probable E3 ubiquitin-protein ligase hulA (812 aa).

One can recognise a C2 domain in the interval 1–109 (MTCSQPNLRV…QMGGDEMLTR (109 aa)). 2 disordered regions span residues 131–235 (NLST…WERR) and 250–350 (RTTT…YFVD). Composition is skewed to polar residues over residues 148 to 165 (MQPS…ASTP), 174 to 199 (ADPT…STIV), 214 to 223 (SRTNLSSFED), and 250 to 267 (RTTT…QTSR). Residues 226 to 259 (GRLPAGWERREDNLGRTYYVDHNTRTTTWTRPSN) form the WW 1 domain. Basic and acidic residues predominate over residues 276-291 (LERRAHQSRMLPEDRT). Residues 292–306 (GASSPNLQENQQQAQ) show a composition bias toward polar residues. A compositionally biased stretch (low complexity) spans 307–330 (TPPAGGSASAVSMMATGATTAGTG). 2 consecutive WW domains span residues 330–363 (GELP…DPRR) and 390–423 (GPLP…DPRL). One can recognise an HECT domain in the interval 479–812 (SASDLKKRLM…VEETLGFGQE (334 aa)). The Glycyl thioester intermediate role is filled by Cys780.

This sequence belongs to the RSP5/NEDD4 family. As to quaternary structure, interacts with creD.

It is found in the cytoplasm. It carries out the reaction S-ubiquitinyl-[E2 ubiquitin-conjugating enzyme]-L-cysteine + [acceptor protein]-L-lysine = [E2 ubiquitin-conjugating enzyme]-L-cysteine + N(6)-ubiquitinyl-[acceptor protein]-L-lysine.. It functions in the pathway protein modification; protein ubiquitination. Functionally, E3 ubiquitin-protein ligase which accepts ubiquitin from an E2 ubiquitin-conjugating enzyme in the form of a thioester and then directly transfers the ubiquitin to targeted substrates. Probably involved in the regulatory network controlling carbon source utilization. The protein is Probable E3 ubiquitin-protein ligase hulA (hulA) of Aspergillus flavus (strain ATCC 200026 / FGSC A1120 / IAM 13836 / NRRL 3357 / JCM 12722 / SRRC 167).